The chain runs to 139 residues: Putative nickel-responsive regulator (139 aa).

Positions 79, 90, 92, and 98 each coordinate Ni(2+).

It belongs to the transcriptional regulatory CopG/NikR family. Ni(2+) is required as a cofactor.

Its function is as follows. Transcriptional regulator. The sequence is that of Putative nickel-responsive regulator from Lawsonia intracellularis (strain PHE/MN1-00).